We begin with the raw amino-acid sequence, 257 residues long: Imidazole glycerol phosphate synthase subunit HisF (257 aa).

Catalysis depends on residues D12 and D131.

The protein belongs to the HisA/HisF family. In terms of assembly, heterodimer of HisH and HisF.

It is found in the cytoplasm. It catalyses the reaction 5-[(5-phospho-1-deoxy-D-ribulos-1-ylimino)methylamino]-1-(5-phospho-beta-D-ribosyl)imidazole-4-carboxamide + L-glutamine = D-erythro-1-(imidazol-4-yl)glycerol 3-phosphate + 5-amino-1-(5-phospho-beta-D-ribosyl)imidazole-4-carboxamide + L-glutamate + H(+). Its pathway is amino-acid biosynthesis; L-histidine biosynthesis; L-histidine from 5-phospho-alpha-D-ribose 1-diphosphate: step 5/9. Its function is as follows. IGPS catalyzes the conversion of PRFAR and glutamine to IGP, AICAR and glutamate. The HisF subunit catalyzes the cyclization activity that produces IGP and AICAR from PRFAR using the ammonia provided by the HisH subunit. This Mycobacteroides abscessus (strain ATCC 19977 / DSM 44196 / CCUG 20993 / CIP 104536 / JCM 13569 / NCTC 13031 / TMC 1543 / L948) (Mycobacterium abscessus) protein is Imidazole glycerol phosphate synthase subunit HisF.